We begin with the raw amino-acid sequence, 892 residues long: Isoleucine--tRNA ligase (892 aa).

Positions Pro-60–His-70 match the 'HIGH' region motif. Residue Glu-552 coordinates L-isoleucyl-5'-AMP. A 'KMSKS' region motif is present at residues Lys-593–Ser-597. Lys-596 is an ATP binding site. Zn(2+) contacts are provided by Cys-862, Cys-865, Cys-879, and Cys-882.

It belongs to the class-I aminoacyl-tRNA synthetase family. IleS type 1 subfamily. As to quaternary structure, monomer. The cofactor is Zn(2+).

It is found in the cytoplasm. It catalyses the reaction tRNA(Ile) + L-isoleucine + ATP = L-isoleucyl-tRNA(Ile) + AMP + diphosphate. Functionally, catalyzes the attachment of isoleucine to tRNA(Ile). As IleRS can inadvertently accommodate and process structurally similar amino acids such as valine, to avoid such errors it has two additional distinct tRNA(Ile)-dependent editing activities. One activity is designated as 'pretransfer' editing and involves the hydrolysis of activated Val-AMP. The other activity is designated 'posttransfer' editing and involves deacylation of mischarged Val-tRNA(Ile). The polypeptide is Isoleucine--tRNA ligase (Mycoplasmopsis agalactiae (strain NCTC 10123 / CIP 59.7 / PG2) (Mycoplasma agalactiae)).